A 196-amino-acid polypeptide reads, in one-letter code: NAD(P)H-quinone oxidoreductase subunit I (196 aa).

4Fe-4S ferredoxin-type domains lie at 55-84 and 95-124; these read GRIH…VDWE and KHYS…MTEE. Positions 64, 67, 70, 74, 104, 107, 110, and 114 each coordinate [4Fe-4S] cluster. Residues 170 to 196 are disordered; that stretch reads SPHDLPEGSQRSGKRPEEIIEEAEASS.

The protein belongs to the complex I 23 kDa subunit family. In terms of assembly, NDH-1 is composed of at least 11 different subunits. It depends on [4Fe-4S] cluster as a cofactor.

The protein localises to the cellular thylakoid membrane. It catalyses the reaction a plastoquinone + NADH + (n+1) H(+)(in) = a plastoquinol + NAD(+) + n H(+)(out). It carries out the reaction a plastoquinone + NADPH + (n+1) H(+)(in) = a plastoquinol + NADP(+) + n H(+)(out). Functionally, NDH-1 shuttles electrons from an unknown electron donor, via FMN and iron-sulfur (Fe-S) centers, to quinones in the respiratory and/or the photosynthetic chain. The immediate electron acceptor for the enzyme in this species is believed to be plastoquinone. Couples the redox reaction to proton translocation, and thus conserves the redox energy in a proton gradient. In Crocosphaera subtropica (strain ATCC 51142 / BH68) (Cyanothece sp. (strain ATCC 51142)), this protein is NAD(P)H-quinone oxidoreductase subunit I.